Reading from the N-terminus, the 305-residue chain is UDP-N-acetylenolpyruvoylglucosamine reductase 2 (305 aa).

The FAD-binding PCMH-type domain occupies 33-197; sequence VGGKADVFVA…LEARFELEEG (165 aa). R176 is a catalytic residue. S226 acts as the Proton donor in catalysis. Residue E296 is part of the active site.

The protein belongs to the MurB family. The cofactor is FAD.

Its subcellular location is the cytoplasm. The catalysed reaction is UDP-N-acetyl-alpha-D-muramate + NADP(+) = UDP-N-acetyl-3-O-(1-carboxyvinyl)-alpha-D-glucosamine + NADPH + H(+). It participates in cell wall biogenesis; peptidoglycan biosynthesis. Functionally, cell wall formation. In Bacillus anthracis, this protein is UDP-N-acetylenolpyruvoylglucosamine reductase 2 (murB2).